Here is a 513-residue protein sequence, read N- to C-terminus: ATP synthase subunit alpha (513 aa).

An ATP-binding site is contributed by 169–176 (GDRQCGKT).

This sequence belongs to the ATPase alpha/beta chains family. F-type ATPases have 2 components, CF(1) - the catalytic core - and CF(0) - the membrane proton channel. CF(1) has five subunits: alpha(3), beta(3), gamma(1), delta(1), epsilon(1). CF(0) has three main subunits: a(1), b(2) and c(9-12). The alpha and beta chains form an alternating ring which encloses part of the gamma chain. CF(1) is attached to CF(0) by a central stalk formed by the gamma and epsilon chains, while a peripheral stalk is formed by the delta and b chains.

The protein resides in the cell inner membrane. The catalysed reaction is ATP + H2O + 4 H(+)(in) = ADP + phosphate + 5 H(+)(out). Functionally, produces ATP from ADP in the presence of a proton gradient across the membrane. The alpha chain is a regulatory subunit. This Burkholderia orbicola (strain AU 1054) protein is ATP synthase subunit alpha.